The following is a 1358-amino-acid chain: DNA-directed RNA polymerase subunit beta (1358 aa).

This sequence belongs to the RNA polymerase beta chain family. In terms of assembly, the RNAP catalytic core consists of 2 alpha, 1 beta, 1 beta' and 1 omega subunit. When a sigma factor is associated with the core the holoenzyme is formed, which can initiate transcription.

The enzyme catalyses RNA(n) + a ribonucleoside 5'-triphosphate = RNA(n+1) + diphosphate. DNA-dependent RNA polymerase catalyzes the transcription of DNA into RNA using the four ribonucleoside triphosphates as substrates. In Methylococcus capsulatus (strain ATCC 33009 / NCIMB 11132 / Bath), this protein is DNA-directed RNA polymerase subunit beta.